We begin with the raw amino-acid sequence, 603 residues long: Peroxisomal targeting signal receptor (603 aa).

A Glycyl cysteine thioester (Cys-Gly) (interchain with G-Cter in ubiquitin) cross-link involves residue C10. Residues 11-33 are amphipathic helix 1 (AH1); the sequence is SANSNAIAQFNKHTQQDRSLQRQ. K22 participates in a covalent cross-link: Glycyl lysine isopeptide (Lys-Gly) (interchain with G-Cter in ubiquitin). The interval 23–49 is disordered; it reads HTQQDRSLQRQAANQQGIVQNGQGFKK. A compositionally biased stretch (polar residues) spans 31-45; sequence QRQAANQQGIVQNGQ. The amphipathic helix 2 (AH2) stretch occupies residues 58-76; the sequence is RQNMDQFMNNGPSQSNFQF. Short sequence motifs (wxxxF/Y motif) lie at residues 99–103, 128–132, and 192–196; these read WTNEF, WATEF, and WDNQF. Positions 232 to 248 are amphipathic helix 4 (AH4); that stretch reads FQEVWDSLNSEEVENDF. Residues 271–275 carry the WxxxF/Y motif 4 motif; the sequence is WEKDF. TPR repeat units lie at residues 304–338, 339–372, 449–482, 484–516, and 518–550; these read ESDPYEIGLQLMENGAKLSEAALAFEAAIQRNEGH, INAWLKLGEVQTQNEKEIAGISALEKCLELHPEN, PDVQMGLGVLFYANEDFDKTIDCFKAALSIKPDD, VLWNRLGASLANSNRSEEAVDAYFKALELKPTF, and RARYNLGVSCINIGCYKEAAEHLLSGLSMHQVE.

It belongs to the peroxisomal targeting signal receptor family. As to quaternary structure, interacts (via WxxxF/Y and LVxEF motifs) with PEX14; promoting translocation through the PEX13-PEX14 docking complex. Monoubiquitinated at Cys-10 by PEX2 during PEX5 passage through the retrotranslocation channel: monoubiquitination acts as a signal for PEX5 extraction and is required for proper export from peroxisomes and recycling. When PEX5 recycling is compromised, polyubiquitinated at Lys-22 by PEX10 during its passage through the retrotranslocation channel, leading to its degradation.

Its subcellular location is the cytoplasm. The protein resides in the cytosol. The protein localises to the peroxisome matrix. Functionally, receptor that mediates peroxisomal import of proteins containing a C-terminal PTS1-type tripeptide peroxisomal targeting signal (SKL-type). Binds to cargo proteins containing a PTS1 peroxisomal targeting signal in the cytosol, and translocates them into the peroxisome matrix by passing through the PEX13-PEX14 docking complex along with cargo proteins. PEX5 receptor is then retrotranslocated into the cytosol, leading to release of bound cargo in the peroxisome matrix, and reset for a subsequent peroxisome import cycle. The chain is Peroxisomal targeting signal receptor (PEX5) from Debaryomyces hansenii (strain ATCC 36239 / CBS 767 / BCRC 21394 / JCM 1990 / NBRC 0083 / IGC 2968) (Yeast).